A 95-amino-acid chain; its full sequence is Aspartyl/glutamyl-tRNA(Asn/Gln) amidotransferase subunit C (95 aa).

The protein belongs to the GatC family. In terms of assembly, heterotrimer of A, B and C subunits.

The catalysed reaction is L-glutamyl-tRNA(Gln) + L-glutamine + ATP + H2O = L-glutaminyl-tRNA(Gln) + L-glutamate + ADP + phosphate + H(+). It catalyses the reaction L-aspartyl-tRNA(Asn) + L-glutamine + ATP + H2O = L-asparaginyl-tRNA(Asn) + L-glutamate + ADP + phosphate + 2 H(+). Functionally, allows the formation of correctly charged Asn-tRNA(Asn) or Gln-tRNA(Gln) through the transamidation of misacylated Asp-tRNA(Asn) or Glu-tRNA(Gln) in organisms which lack either or both of asparaginyl-tRNA or glutaminyl-tRNA synthetases. The reaction takes place in the presence of glutamine and ATP through an activated phospho-Asp-tRNA(Asn) or phospho-Glu-tRNA(Gln). The chain is Aspartyl/glutamyl-tRNA(Asn/Gln) amidotransferase subunit C from Chlorobium chlorochromatii (strain CaD3).